The sequence spans 339 residues: Glycerol-3-phosphate dehydrogenase [NAD(P)+] (339 aa).

3 residues coordinate NADPH: Ser13, Trp14, and Lys108. Sn-glycerol 3-phosphate contacts are provided by Lys108, Gly139, and Ser141. Ala143 is an NADPH binding site. Lys194, Asp247, Ser257, Arg258, and Asn259 together coordinate sn-glycerol 3-phosphate. Lys194 acts as the Proton acceptor in catalysis. NADPH is bound at residue Arg258. 2 residues coordinate NADPH: Val282 and Glu284.

It belongs to the NAD-dependent glycerol-3-phosphate dehydrogenase family.

The protein localises to the cytoplasm. It carries out the reaction sn-glycerol 3-phosphate + NAD(+) = dihydroxyacetone phosphate + NADH + H(+). It catalyses the reaction sn-glycerol 3-phosphate + NADP(+) = dihydroxyacetone phosphate + NADPH + H(+). Its pathway is membrane lipid metabolism; glycerophospholipid metabolism. In terms of biological role, catalyzes the reduction of the glycolytic intermediate dihydroxyacetone phosphate (DHAP) to sn-glycerol 3-phosphate (G3P), the key precursor for phospholipid synthesis. The chain is Glycerol-3-phosphate dehydrogenase [NAD(P)+] from Streptococcus mutans serotype c (strain ATCC 700610 / UA159).